Here is a 324-residue protein sequence, read N- to C-terminus: Acetyl-coenzyme A carboxylase carboxyl transferase subunit alpha (324 aa).

Residues 41–291 (RLDRLKEKIY…QEYVLQEWLK (251 aa)) enclose the CoA carboxyltransferase C-terminal domain.

This sequence belongs to the AccA family. Acetyl-CoA carboxylase is a heterohexamer composed of biotin carboxyl carrier protein (AccB), biotin carboxylase (AccC) and two subunits each of ACCase subunit alpha (AccA) and ACCase subunit beta (AccD).

The protein localises to the cytoplasm. It carries out the reaction N(6)-carboxybiotinyl-L-lysyl-[protein] + acetyl-CoA = N(6)-biotinyl-L-lysyl-[protein] + malonyl-CoA. Its pathway is lipid metabolism; malonyl-CoA biosynthesis; malonyl-CoA from acetyl-CoA: step 1/1. Component of the acetyl coenzyme A carboxylase (ACC) complex. First, biotin carboxylase catalyzes the carboxylation of biotin on its carrier protein (BCCP) and then the CO(2) group is transferred by the carboxyltransferase to acetyl-CoA to form malonyl-CoA. This is Acetyl-coenzyme A carboxylase carboxyl transferase subunit alpha from Chlamydia muridarum (strain MoPn / Nigg).